Consider the following 233-residue polypeptide: Probable 2-phosphosulfolactate phosphatase (233 aa).

This sequence belongs to the ComB family. Mg(2+) is required as a cofactor.

The catalysed reaction is (2R)-O-phospho-3-sulfolactate + H2O = (2R)-3-sulfolactate + phosphate. The protein is Probable 2-phosphosulfolactate phosphatase of Clostridium tetani (strain Massachusetts / E88).